The chain runs to 508 residues: Cell division protein FtsZ (508 aa).

Residues 24-28, 111-113, E142, R146, and D190 each bind GTP; these read GAGGN and GTG. Disordered regions lie at residues 342–389 and 428–508; these read IAET…SAPQ and VAEE…RLAN. The segment covering 464-482 has biased composition (low complexity); that stretch reads QQASAPQAQARSAQSARPQ.

It belongs to the FtsZ family. In terms of assembly, homodimer. Polymerizes to form a dynamic ring structure in a strictly GTP-dependent manner. Interacts directly with several other division proteins.

The protein localises to the cytoplasm. Essential cell division protein that forms a contractile ring structure (Z ring) at the future cell division site. The regulation of the ring assembly controls the timing and the location of cell division. One of the functions of the FtsZ ring is to recruit other cell division proteins to the septum to produce a new cell wall between the dividing cells. Binds GTP and shows GTPase activity. The chain is Cell division protein FtsZ from Caulobacter vibrioides (strain ATCC 19089 / CIP 103742 / CB 15) (Caulobacter crescentus).